We begin with the raw amino-acid sequence, 540 residues long: Chaperonin GroEL (540 aa).

ATP-binding positions include 29–32 (TLGP), 86–90 (DGTTT), Gly413, and Asp495.

It belongs to the chaperonin (HSP60) family. As to quaternary structure, forms a cylinder of 14 subunits composed of two heptameric rings stacked back-to-back. Interacts with the co-chaperonin GroES.

It localises to the cytoplasm. It carries out the reaction ATP + H2O + a folded polypeptide = ADP + phosphate + an unfolded polypeptide.. In terms of biological role, together with its co-chaperonin GroES, plays an essential role in assisting protein folding. The GroEL-GroES system forms a nano-cage that allows encapsulation of the non-native substrate proteins and provides a physical environment optimized to promote and accelerate protein folding. This chain is Chaperonin GroEL, found in Caldanaerobacter subterraneus subsp. tengcongensis (strain DSM 15242 / JCM 11007 / NBRC 100824 / MB4) (Thermoanaerobacter tengcongensis).